Reading from the N-terminus, the 566-residue chain is Urease subunit alpha (566 aa).

The Urease domain maps to 129-566 (GGVDTHIHFI…LPLAQRYFLF (438 aa)). Residues H134, H136, and K217 each coordinate Ni(2+). Position 217 is an N6-carboxylysine (K217). Residue H219 participates in substrate binding. Ni(2+) contacts are provided by H246 and H272. H320 acts as the Proton donor in catalysis. Residue D360 coordinates Ni(2+).

It belongs to the metallo-dependent hydrolases superfamily. Urease alpha subunit family. Heterotrimer of UreA (gamma), UreB (beta) and UreC (alpha) subunits. Three heterotrimers associate to form the active enzyme. Ni cation serves as cofactor. In terms of processing, carboxylation allows a single lysine to coordinate two nickel ions.

It is found in the cytoplasm. The enzyme catalyses urea + 2 H2O + H(+) = hydrogencarbonate + 2 NH4(+). It functions in the pathway nitrogen metabolism; urea degradation; CO(2) and NH(3) from urea (urease route): step 1/1. This Janthinobacterium sp. (strain Marseille) (Minibacterium massiliensis) protein is Urease subunit alpha.